The chain runs to 76 residues: UPF0291 protein GK1331 (76 aa).

Residues 57 to 76 (PSGNDVTPKKLKESQRRRFH) are disordered. Residues 63–76 (TPKKLKESQRRRFH) are compositionally biased toward basic and acidic residues.

It belongs to the UPF0291 family.

It localises to the cytoplasm. This Geobacillus kaustophilus (strain HTA426) protein is UPF0291 protein GK1331.